A 221-amino-acid polypeptide reads, in one-letter code: Interleukin-12 subunit alpha (221 aa).

The N-terminal stretch at 1–25 (MCPLRSLLLISTLVLLHHLPHLSLG) is a signal peptide. Disulfide bonds link Cys-39–Cys-112, Cys-66–Cys-198, and Cys-87–Cys-125. Asn-95 is a glycosylation site (N-linked (GlcNAc...) asparagine).

The protein belongs to the IL-6 superfamily. Heterodimer with IL12B; disulfide-linked. This heterodimer is known as interleukin IL-12. Heterodimer with EBI3/IL27B; not disulfide-linked. This heterodimer is known as interleukin IL-35. Interacts with NBR1; this interaction promotes IL-12 secretion.

Its subcellular location is the secreted. Heterodimerizes with IL12B to form the IL-12 cytokine or with EBI3/IL27B to form the IL-35 cytokine. IL-12 is primarily produced by professional antigen-presenting cells (APCs) such as B-cells and dendritic cells (DCs) as well as macrophages and granulocytes and regulates T-cell and natural killer-cell responses, induces the production of interferon-gamma (IFN-gamma), favors the differentiation of T-helper 1 (Th1) cells and is an important link between innate resistance and adaptive immunity. Mechanistically, exerts its biological effects through a receptor composed of IL12R1 and IL12R2 subunits. Binding to the receptor results in the rapid tyrosine phosphorylation of a number of cellular substrates including the JAK family kinases TYK2 and JAK2. In turn, recruited STAT4 gets phosphorylated and translocates to the nucleus where it regulates cytokine/growth factor responsive genes. As part of IL-35, plays essential roles in maintaining the immune homeostasis of the liver microenvironment and also functions as an immune-suppressive cytokine. Mediates biological events through unconventional receptors composed of IL12RB2 and gp130/IL6ST heterodimers or homodimers. Signaling requires the transcription factors STAT1 and STAT4, which form a unique heterodimer that binds to distinct DNA sites. The sequence is that of Interleukin-12 subunit alpha (IL12A) from Capra hircus (Goat).